The primary structure comprises 144 residues: EF-hand calcium-binding domain-containing protein 8 (144 aa).

EF-hand domains lie at 52-86 and 87-122; these read IHLA…VLSS and VSDE…EFQG.

The polypeptide is EF-hand calcium-binding domain-containing protein 8 (EFCAB8) (Homo sapiens (Human)).